The sequence spans 993 residues: Glycogen phosphorylase 2 (993 aa).

Residues 1–82 (MEEKRSTNSP…SNQSEDPATQ (82 aa)) are disordered. Positions 19-48 (RSGSITSATSHPPRSNSNPKLVAKHQQQLY) are enriched in polar residues. Residues 58–77 (EQQNQQPQQQQQKQTSNQSE) show a composition bias toward low complexity. N6-(pyridoxal phosphate)lysine is present on Lys763. Residues 962–981 (VISGGDKTNNTLKPKQTTKG) show a composition bias toward polar residues. The interval 962-993 (VISGGDKTNNTLKPKQTTKGFNIGGQPGNPTN) is disordered. Residues 983-993 (NIGGQPGNPTN) are compositionally biased toward gly residues.

Belongs to the glycogen phosphorylase family. Homodimer. Pyridoxal 5'-phosphate is required as a cofactor. In terms of processing, the N-terminus is blocked. Post-translationally, enzyme activity requires processing of the 113 kDa peptide to an enzymatically active 106 kDa form of the protein. Processing would occur near the middle of the Gln-rich repetitive element.

The catalysed reaction is [(1-&gt;4)-alpha-D-glucosyl](n) + phosphate = [(1-&gt;4)-alpha-D-glucosyl](n-1) + alpha-D-glucose 1-phosphate. Phosphorylase is an important allosteric enzyme in carbohydrate metabolism. Enzymes from different sources differ in their regulatory mechanisms and in their natural substrates. However, all known phosphorylases share catalytic and structural properties. The sequence is that of Glycogen phosphorylase 2 (glpD) from Dictyostelium discoideum (Social amoeba).